The sequence spans 577 residues: E3 ubiquitin-protein ligase MSL2 (577 aa).

The sufficient for interaction with MSL1 stretch occupies residues 1-116 (MNPVNATALY…CEYITQTTLA (116 aa)). Positions 44, 47, 62, 64, 67, 70, 81, and 84 each coordinate Zn(2+). Residues 44-85 (CCVCGHLLQDPIAPTNSTCQHYVCKTCKGKKMMMKPSCSWCK) form an RING-type zinc finger. Residue K375 forms a Glycyl lysine isopeptide (Lys-Gly) (interchain with G-Cter in SUMO2) linkage. A disordered region spans residues 405-428 (TKSMKKSHEHGSKKSHSKSKPGIL). Over residues 407 to 423 (SMKKSHEHGSKKSHSKS) the composition is skewed to basic residues. At S447 the chain carries Phosphoserine. The CXC MSL2-type domain occupies 457-508 (QEKKGCKCGRATQNPSVLTCRGQRCPCYSNRKACLDCICRGCQNSYMANGEK). Zn(2+) contacts are provided by C462, C464, C476, C481, C483, C490, C493, C495, and C498.

Belongs to the MSL2 family. In terms of assembly, component of a multisubunit histone acetyltransferase complex (MSL) at least composed of the KAT8/MOF/MYST1, MSL1/hampin, MSL2 and MSL3. Forms a MSL heterotetrameric core with MSL1.

It localises to the nucleus. Its subcellular location is the chromosome. It catalyses the reaction S-ubiquitinyl-[E2 ubiquitin-conjugating enzyme]-L-cysteine + [acceptor protein]-L-lysine = [E2 ubiquitin-conjugating enzyme]-L-cysteine + N(6)-ubiquitinyl-[acceptor protein]-L-lysine.. The protein operates within protein modification; protein ubiquitination. Its function is as follows. Non-catalytic component of the MSL histone acetyltransferase complex, a multiprotein complex that mediates the majority of histone H4 acetylation at 'Lys-16' (H4K16ac), an epigenetic mark that prevents chromatin compaction. The MSL complex is required for chromosome stability and genome integrity by maintaining homeostatic levels of H4K16ac. The MSL complex is also involved in gene dosage by promoting up-regulation of genes expressed by the X chromosome. X up-regulation is required to compensate for autosomal biallelic expression. The MSL complex also participates in gene dosage compensation by promoting expression of Tsix non-coding RNA. MSL2 plays a key role in gene dosage by ensuring biallelic expression of a subset of dosage-sensitive genes, including many haploinsufficient genes. Acts by promoting promoter-enhancer contacts, thereby preventing DNA methylation of one allele and creating a methylation-free environment for methylation-sensitive transcription factors such as SP1, KANSL1 and KANSL3. Also acts as an E3 ubiquitin ligase that promotes monoubiquitination of histone H2B at 'Lys-35' (H2BK34Ub), but not that of H2A. This activity is greatly enhanced by heterodimerization with MSL1. H2B ubiquitination in turn stimulates histone H3 methylation at 'Lys-4' (H3K4me) and 'Lys-79' (H3K79me) and leads to gene activation, including that of HOXA9 and MEIS1. This chain is E3 ubiquitin-protein ligase MSL2, found in Mus musculus (Mouse).